Here is a 310-residue protein sequence, read N- to C-terminus: Signal peptidase I (310 aa).

A helical transmembrane segment spans residues 5-25 (LSSFLLASSLITGTLWIINKI). Residues 26-57 (LSHNLLDSKIPFNIKKSKIYYKSKQVVQTFAS) lie on the Cytoplasmic side of the membrane. The chain crosses the membrane as a helical span at residues 58–78 (FFPILIIVFIIRTFICEPFQI). Topologically, residues 79-310 (PSESMMPTLL…IQFDRIGNIY (232 aa)) are extracellular. Residues serine 82 and lysine 137 contribute to the active site.

It belongs to the peptidase S26 family.

It is found in the cell membrane. The enzyme catalyses Cleavage of hydrophobic, N-terminal signal or leader sequences from secreted and periplasmic proteins.. In Buchnera aphidicola subsp. Baizongia pistaciae (strain Bp), this protein is Signal peptidase I (lepB).